Here is a 309-residue protein sequence, read N- to C-terminus: Probable MRF1 mitochondrial N(5)-glutamine methyltransferase mtq1 (309 aa).

Residues 124–128 (CTGSG), Asp148, and Asn200 contribute to the S-adenosyl-L-methionine site. 200–203 (NPPY) lines the substrate pocket.

This sequence belongs to the protein N5-glutamine methyltransferase family.

It localises to the mitochondrion. The enzyme catalyses L-glutaminyl-[peptide chain release factor] + S-adenosyl-L-methionine = N(5)-methyl-L-glutaminyl-[peptide chain release factor] + S-adenosyl-L-homocysteine + H(+). Its function is as follows. Methylates MRF1 on 'Gln-270' using S-adenosyl L-methionine as methyl donor. The chain is Probable MRF1 mitochondrial N(5)-glutamine methyltransferase mtq1 (mtq1) from Schizosaccharomyces pombe (strain 972 / ATCC 24843) (Fission yeast).